The sequence spans 158 residues: NAD(P)H-quinone oxidoreductase subunit J, chloroplastic (158 aa).

Belongs to the complex I 30 kDa subunit family. In terms of assembly, NDH is composed of at least 16 different subunits, 5 of which are encoded in the nucleus.

The protein localises to the plastid. It is found in the chloroplast thylakoid membrane. It carries out the reaction a plastoquinone + NADH + (n+1) H(+)(in) = a plastoquinol + NAD(+) + n H(+)(out). The enzyme catalyses a plastoquinone + NADPH + (n+1) H(+)(in) = a plastoquinol + NADP(+) + n H(+)(out). Functionally, NDH shuttles electrons from NAD(P)H:plastoquinone, via FMN and iron-sulfur (Fe-S) centers, to quinones in the photosynthetic chain and possibly in a chloroplast respiratory chain. The immediate electron acceptor for the enzyme in this species is believed to be plastoquinone. Couples the redox reaction to proton translocation, and thus conserves the redox energy in a proton gradient. The polypeptide is NAD(P)H-quinone oxidoreductase subunit J, chloroplastic (Liriodendron tulipifera (Tuliptree)).